Consider the following 1096-residue polypeptide: MFNTTFANRTLPDLVEIQRASFCWFLNEGLAEEIQSFSPIVNYTGNLELHLFGDQYTLRYPKHNINECKRRDTTYSVQIYVPAQLINRETGVIKEQEVFIGDLPLMTDRGTFIINGAERVIVNQIVRSPGIYYKSELDKQGRRTYSSSLISNRGAWVKFETDRNDLVWVRIDKTRKIPAHVFLKAMGLSDTDIYNGLRHPEYLKKTFRFEGNYTTETALIQMYNKLRPGEPATVTGGQQLLYSRFFDPKRYDLGKVGRYKLNKKLNLSVPENVRVLTPQDTLAAIDYLINLKFEIGETDDIDHLGNRRVRSVGELLQNQVRIGLNRLERIIRERMTICDITSLTPNTLVNPKPIIASIREFFGSSQLSQFMDQTNPLAELTHKRRISALGPGGLNRDRAGFGVRDIHPSHYGRICPIETPEGPNAGLIGVLATHARINTYGFIEAPFFKVQDGQVYNHSQPIYLTADQEDKYRIAPGDITLDETNRIATKIVPIKYRQEFTTTKPNQVDFIAVSPIQVISIATSLIPFLEHDDANRALMGSNMQRQAVPLLYPESPLVGTGLEAQAARDSGMVVVSIEDGQVTFVSGDKICVTNKKGDEIAYYLQKYQRSNQDTCINQRPTVWLGEDVIEGQVIADGAATEGGELALGQNILVAYLPWEGYNYEDAFLINERLVYNDVYTSVHIEKYEIEARQTKLGSEEITRELPNVGEAALRKLDENGIIVIGSWVEAGDILIGKVTPKGESDQPPEGKLLRAIFGEKARDVRDTSLRVPNGGRGRILDVRIFTREKGDELPTGANIVIRVYIAQSRKIQVGDKMAGRHGNKGIISRILPRQDMPYLPDGTPVDLVLNPLGVPSRMNVGQIFECLLGLAAENLNKRFKITPFDEMHGAEASRVLVNEKLNEAKIKTGENWLFDLRHPGKITLYDGRTGEAFDNPVTIGVSYMLKLVHLVDDKIHARSTGPYSLVTQQPLGGRAQHGGQRLGEMEVWALEAFGASYTLQELLTVKSDDMQGRNETLNAIVKGKPIPRPGTPESFKVLMRELQSLGLDIGAYKIENLPDGQTRGIEVDLMMNYQQSRLFKPLYESMQTKNNENLFL.

It belongs to the RNA polymerase beta chain family. In plastids the minimal PEP RNA polymerase catalytic core is composed of four subunits: alpha, beta, beta', and beta''. When a (nuclear-encoded) sigma factor is associated with the core the holoenzyme is formed, which can initiate transcription.

The protein localises to the plastid. Its subcellular location is the chloroplast. It catalyses the reaction RNA(n) + a ribonucleoside 5'-triphosphate = RNA(n+1) + diphosphate. DNA-dependent RNA polymerase catalyzes the transcription of DNA into RNA using the four ribonucleoside triphosphates as substrates. In Guillardia theta (Cryptophyte), this protein is DNA-directed RNA polymerase subunit beta.